Reading from the N-terminus, the 315-residue chain is Homoserine O-succinyltransferase (315 aa).

Catalysis depends on Cys-142, which acts as the Acyl-thioester intermediate. Lys-163 and Ser-192 together coordinate substrate. Catalysis depends on His-235, which acts as the Proton acceptor. The active site involves Glu-237. Substrate is bound at residue Arg-249.

The protein belongs to the MetA family.

It localises to the cytoplasm. The catalysed reaction is L-homoserine + succinyl-CoA = O-succinyl-L-homoserine + CoA. Its pathway is amino-acid biosynthesis; L-methionine biosynthesis via de novo pathway; O-succinyl-L-homoserine from L-homoserine: step 1/1. Its function is as follows. Transfers a succinyl group from succinyl-CoA to L-homoserine, forming succinyl-L-homoserine. The polypeptide is Homoserine O-succinyltransferase (Shewanella piezotolerans (strain WP3 / JCM 13877)).